A 233-amino-acid chain; its full sequence is DNA repair protein RecO (233 aa).

Belongs to the RecO family.

In terms of biological role, involved in DNA repair and RecF pathway recombination. This is DNA repair protein RecO from Francisella philomiragia subsp. philomiragia (strain ATCC 25017 / CCUG 19701 / FSC 153 / O#319-036).